The sequence spans 783 residues: Transcription factor Sp3 (783 aa).

Residues 1 to 12 show a composition bias toward basic and acidic residues; that stretch reads MTAPEKPVKQEE. Residues 1–55 are disordered; sequence MTAPEKPVKQEEMAALDVDGGGGGGGHGEYLQQQQQQQQQHGNGAAAAAAQDTQP. A compositionally biased stretch (gly residues) spans 19-28; it reads DGGGGGGGHG. Residues 29–51 are compositionally biased toward low complexity; sequence EYLQQQQQQQQQHGNGAAAAAAQ. Ser-72 carries the phosphoserine modification. Residue Lys-122 forms a Glycyl lysine isopeptide (Lys-Gly) (interchain with G-Cter in SUMO) linkage. Positions 140–239 are transactivation domain (Gln-rich); that stretch reads QYVLPLQNLQ…IPQTGQVQVQ (100 aa). The tract at residues 302-340 is disordered; that stretch reads GQAMDSSDNSERTGERVSPDVNETNADTDLFVPTSSSSQ. The span at 310-319 shows a compositional bias: basic and acidic residues; the sequence is NSERTGERVS. A compositionally biased stretch (polar residues) spans 322–340; it reads VNETNADTDLFVPTSSSSQ. The transactivation domain (Gln-rich) stretch occupies residues 352–501; sequence QQNTNSLTTT…TPVQTLTLGQ (150 aa). Residues 463–471 carry the 9aaTAD motif; the sequence is ITWQTFQVQ. A repressor domain region spans residues 536–622; the sequence is IQLHPGENAD…RGTNLGKKKQ (87 aa). At Lys-553 the chain carries N6-acetyllysine; alternate. A Glycyl lysine isopeptide (Lys-Gly) (interchain with G-Cter in SUMO); alternate cross-link involves residue Lys-553. Lys-553 is covalently cross-linked (Glycyl lysine isopeptide (Lys-Gly) (interchain with G-Cter in SUMO1); alternate). Lys-553 is covalently cross-linked (Glycyl lysine isopeptide (Lys-Gly) (interchain with G-Cter in SUMO2); alternate). A phosphoserine mark is found at Ser-565 and Ser-568. Lys-595 participates in a covalent cross-link: Glycyl lysine isopeptide (Lys-Gly) (interchain with G-Cter in SUMO2). A C2H2-type 1 zinc finger spans residues 623–647; that stretch reads HICHIPGCGKVYGKTSHLRAHLRWH. Ser-648 is modified (phosphoserine). 2 C2H2-type zinc fingers span residues 653–677 and 683–705; these read FICN…RRTH and FVCP…IKTH.

This sequence belongs to the Sp1 C2H2-type zinc-finger protein family. Interacts with HLTF; the interaction may be required for basal transcriptional activity of HLTF. Interacts with HDAC1; the interaction deacetylates SP3 and regulates its transcriptional activity. Interacts with HDAC2 (preferably the CK2-phosphorylated form); the interaction deacetylates SP3 and regulates its transcriptional activity. Ceramides can also regulate acetylation/deacetylation events through altering the interaction of HDAC with SP3. Interacts with MEIS2 isoform Meis2D and PBX1 isoform PBX1a. Acetylated by histone acetyltransferase p300, deacetylated by HDACs. Acetylation/deacetylation states regulate transcriptional activity. Acetylation appears to activate transcription. Alternate sumoylation and acetylation at Lys-553 also control transcriptional activity. Post-translationally, sumoylated on all isoforms. Sumoylated on 2 sites in longer isoforms with Lys-553 being the major site. Sumoylation at this site promotes nuclear localization to the nuclear periphery, nuclear dots and PML nuclear bodies. Sumoylation on Lys-553 represses the transactivation activity, except for the largest isoform which has little effect on transactivation. Alternate sumoylation and acetylation at Lys-553 also control transcriptional activity.

Its subcellular location is the nucleus. It localises to the PML body. Its function is as follows. Transcriptional factor that can act as an activator or repressor depending on isoform and/or post-translational modifications. Binds to GT and GC boxes promoter elements. Competes with SP1 for the GC-box promoters. Weak activator of transcription but can activate a number of genes involved in different processes such as cell-cycle regulation, hormone-induction and house-keeping. The sequence is that of Transcription factor Sp3 (Sp3) from Mus musculus (Mouse).